We begin with the raw amino-acid sequence, 396 residues long: Tryptophan synthase beta chain (396 aa).

Lys86 is modified (N6-(pyridoxal phosphate)lysine).

It belongs to the TrpB family. In terms of assembly, tetramer of two alpha and two beta chains. The cofactor is pyridoxal 5'-phosphate.

It carries out the reaction (1S,2R)-1-C-(indol-3-yl)glycerol 3-phosphate + L-serine = D-glyceraldehyde 3-phosphate + L-tryptophan + H2O. It participates in amino-acid biosynthesis; L-tryptophan biosynthesis; L-tryptophan from chorismate: step 5/5. The beta subunit is responsible for the synthesis of L-tryptophan from indole and L-serine. This Francisella tularensis subsp. tularensis (strain FSC 198) protein is Tryptophan synthase beta chain.